The chain runs to 57 residues: Phosphatase RapH inhibitor (57 aa).

Propeptides lie at residues 1 to 34 (MPIKKKVMMCLAVTLVFGSMSFPTLTNSGGFKES) and 41 to 57 (YIDHSPYKLSDQKKALS). Residues 26–57 (TNSGGFKESTDRNTTYIDHSPYKLSDQKKALS) are disordered.

The protein belongs to the Phr family. Contains a predicted signal peptide cleavage site in the N-terminal region, however the propeptide is probably only subject to processing events at the ends of the mature peptide.

It localises to the secreted. It is found in the cytoplasm. Its function is as follows. Signaling molecule involved the regulation of both sporulation and competence. Secreted during production, but the mature peptide acts intracellularly, indicating that it needs to be imported into the cell to function. Acts by inhibiting RapH activity. Can inhibit both RapH activities, the dephosphorylation of Spo0F and the sequestration of ComA. This Bacillus subtilis (strain 168) protein is Phosphatase RapH inhibitor (phrH).